A 60-amino-acid polypeptide reads, in one-letter code: Large ribosomal subunit protein uL30 (60 aa).

It belongs to the universal ribosomal protein uL30 family. Part of the 50S ribosomal subunit.

This is Large ribosomal subunit protein uL30 from Salinispora tropica (strain ATCC BAA-916 / DSM 44818 / JCM 13857 / NBRC 105044 / CNB-440).